A 316-amino-acid polypeptide reads, in one-letter code: Beta-ketoacyl-[acyl-carrier-protein] synthase III (316 aa).

Active-site residues include C112 and H243. Residues 244–248 (QANLR) form an ACP-binding region. N273 is a catalytic residue.

This sequence belongs to the thiolase-like superfamily. FabH family. As to quaternary structure, homodimer.

It localises to the cytoplasm. It catalyses the reaction malonyl-[ACP] + acetyl-CoA + H(+) = 3-oxobutanoyl-[ACP] + CO2 + CoA. The protein operates within lipid metabolism; fatty acid biosynthesis. In terms of biological role, catalyzes the condensation reaction of fatty acid synthesis by the addition to an acyl acceptor of two carbons from malonyl-ACP. Catalyzes the first condensation reaction which initiates fatty acid synthesis and may therefore play a role in governing the total rate of fatty acid production. Possesses both acetoacetyl-ACP synthase and acetyl transacylase activities. Its substrate specificity determines the biosynthesis of branched-chain and/or straight-chain of fatty acids. The chain is Beta-ketoacyl-[acyl-carrier-protein] synthase III from Yersinia pestis (strain Pestoides F).